The primary structure comprises 113 residues: Protein SPIRAL1-like 1 (113 aa).

The span at 1–12 (MGRGVSVGGGQS) shows a compositional bias: gly residues. The interval 1 to 50 (MGRGVSVGGGQSSLGYLFGSGEAPKPAINNAPAPSSETLPISADPSPKHV) is disordered. Positions 23 to 34 (APKPAINNAPAP) are enriched in low complexity. The residue at position 69 (S69) is a Phosphoserine. A disordered region spans residues 79-113 (QNTGNFLTDRPSTKVHAAPGGGSSLDYLFGGGGSN). Over residues 97 to 113 (PGGGSSLDYLFGGGGSN) the composition is skewed to gly residues.

The protein belongs to the SPIRAL1 family. In terms of tissue distribution, detected in pollen of mature flowers.

In terms of biological role, acts redundantly with SPR1 in maintaining the cortical microtubules organization essential for anisotropic cell growth. This Arabidopsis thaliana (Mouse-ear cress) protein is Protein SPIRAL1-like 1 (SP1L1).